The following is an 84-amino-acid chain: Putative defensin-like protein 114 (84 aa).

A signal peptide spans 1 to 24; the sequence is MAITKKCFAAFVLILLFVMPFVYC. Cystine bridges form between Cys-41-Cys-81, Cys-47-Cys-69, Cys-54-Cys-79, and Cys-58-Cys-80.

The protein belongs to the DEFL family.

The protein resides in the secreted. The sequence is that of Putative defensin-like protein 114 from Arabidopsis thaliana (Mouse-ear cress).